A 504-amino-acid polypeptide reads, in one-letter code: Glycerol kinase (504 aa).

Threonine 14 is a binding site for ADP. Residues threonine 14, threonine 15, and serine 16 each coordinate ATP. Threonine 14 serves as a coordination point for sn-glycerol 3-phosphate. Arginine 18 is a binding site for ADP. Arginine 84, glutamate 85, tyrosine 136, and aspartate 246 together coordinate sn-glycerol 3-phosphate. Residues arginine 84, glutamate 85, tyrosine 136, aspartate 246, and glutamine 247 each coordinate glycerol. Threonine 268 and glycine 311 together coordinate ADP. The ATP site is built by threonine 268, glycine 311, glutamine 315, and glycine 412. ADP contacts are provided by glycine 412 and asparagine 416.

It belongs to the FGGY kinase family.

The enzyme catalyses glycerol + ATP = sn-glycerol 3-phosphate + ADP + H(+). The protein operates within polyol metabolism; glycerol degradation via glycerol kinase pathway; sn-glycerol 3-phosphate from glycerol: step 1/1. With respect to regulation, inhibited by fructose 1,6-bisphosphate (FBP). Functionally, key enzyme in the regulation of glycerol uptake and metabolism. Catalyzes the phosphorylation of glycerol to yield sn-glycerol 3-phosphate. The protein is Glycerol kinase of Aliivibrio salmonicida (strain LFI1238) (Vibrio salmonicida (strain LFI1238)).